A 460-amino-acid chain; its full sequence is Protein btn1 (460 aa).

The next 11 helical transmembrane spans lie at 42–62, 76–96, 105–125, 135–155, 164–184, 195–215, 287–307, 323–343, 356–376, 378–398, and 428–448; these read VCVA…VILS, VVLL…PYFI, IIIF…SPPY, LAGI…FVGL, LAAW…AYAL, ATLL…FMVL, GLFF…YTIN, FAHF…GVFI, LYLP…QAVF, FIPS…LGGL, and AAGI…LCDW.

The protein belongs to the battenin family.

The protein resides in the vacuole membrane. Its function is as follows. Involved in vacuolar transport and vacuole pH homeostasis. Also required for cytokinesis. The protein is Protein btn1 (btn1) of Aspergillus fumigatus (strain ATCC MYA-4609 / CBS 101355 / FGSC A1100 / Af293) (Neosartorya fumigata).